Here is a 1291-residue protein sequence, read N- to C-terminus: DNA-directed RNA polymerase subunit beta (1291 aa).

The protein belongs to the RNA polymerase beta chain family. As to quaternary structure, the RNAP catalytic core consists of 2 alpha, 1 beta, 1 beta' and 1 omega subunit. When a sigma factor is associated with the core the holoenzyme is formed, which can initiate transcription.

It catalyses the reaction RNA(n) + a ribonucleoside 5'-triphosphate = RNA(n+1) + diphosphate. Functionally, DNA-dependent RNA polymerase catalyzes the transcription of DNA into RNA using the four ribonucleoside triphosphates as substrates. The protein is DNA-directed RNA polymerase subunit beta of Cytophaga hutchinsonii (strain ATCC 33406 / DSM 1761 / CIP 103989 / NBRC 15051 / NCIMB 9469 / D465).